A 108-amino-acid polypeptide reads, in one-letter code: MSVQLNAFTFILERRGWRMVCYEQLTTNGTRILHFYLKDNPTFFATYSSQFLSDTKMIRRFASWSGQLLEGSNSVFWTNITPFEPIDEETAEDIKNLDKVVEGMNFTL.

This sequence belongs to the phi29likevirus gp16.9 family.

This Bacillus phage phi29 (Bacteriophage phi-29) protein is Gene product 16.9 (16.9).